Consider the following 135-residue polypeptide: C-type lectin BPL (135 aa).

4 cysteine pairs are disulfide-bonded: Cys3–Cys14, Cys31–Cys131, Cys38–Cys133, and Cys106–Cys123. The C-type lectin domain occupies 10 to 132 (MNGLCYKIFN…CESKNAFLCQ (123 aa)). Gln96, Asp98, Glu104, and Asp120 together coordinate Ca(2+). A Galactose-binding motif is present at residues 96–98 (QPD).

It belongs to the true venom lectin family. In terms of assembly, homodimer; disulfide-linked. As to expression, expressed by the venom gland.

The protein localises to the secreted. Its function is as follows. Galactose-binding protein which recognizes specific carbohydrate structures and agglutinates a variety of animal cells by binding to cell-surface glycoproteins and glycolipids. Calcium-dependent lectin. Shows high hemagglutinating activity in the presence of human erythrocytes, which are agglutinated with a minimum hemagglutination concentration (MHC) of 2.5-0.35 ug/ml. Causes indirect nephrotoxicity. Causes reductions in perfusion pressures, renal vascular resistance, urinary flow, glomerular filtration rate, sodium, potassium and chloride tubular transport. Its effects may be caused by the release of inflammatory mediators. The polypeptide is C-type lectin BPL (Bothrops pirajai (Piraja's lancehead)).